The sequence spans 702 residues: ATP-dependent zinc metalloprotease FtsH (702 aa).

Topologically, residues 1 to 26 (MKKRNKGLVEQTTTEKNNFSRKTAWK) are cytoplasmic. The chain crosses the membrane as a helical span at residues 27 to 47 (VFWWVIILAVVIGVLAYIFSP). The Extracellular portion of the chain corresponds to 48–175 (RAATAVVESW…FIAPDTRARD (128 aa)). Residues 176–196 (VLNGLFGLLPIIIFVVFFLLF) traverse the membrane as a helical segment. Residues 197–702 (WRSARGISAG…EVKPESETNS (506 aa)) lie on the Cytoplasmic side of the membrane. 271–278 (GPPGTGKT) provides a ligand contact to ATP. A Zn(2+)-binding site is contributed by H493. E494 is an active-site residue. Zn(2+) is bound by residues H497 and D572. Residues 682-702 (EQQAKQKLNKSEVKPESETNS) form a disordered region. Over residues 690 to 702 (NKSEVKPESETNS) the composition is skewed to basic and acidic residues.

This sequence in the central section; belongs to the AAA ATPase family. The protein in the C-terminal section; belongs to the peptidase M41 family. As to quaternary structure, homohexamer. The cofactor is Zn(2+).

Its subcellular location is the cell membrane. Functionally, acts as a processive, ATP-dependent zinc metallopeptidase for both cytoplasmic and membrane proteins. Plays a role in the quality control of integral membrane proteins. This is ATP-dependent zinc metalloprotease FtsH from Mycoplasma genitalium (strain ATCC 33530 / DSM 19775 / NCTC 10195 / G37) (Mycoplasmoides genitalium).